The primary structure comprises 143 residues: 3-hydroxyacyl-[acyl-carrier-protein] dehydratase FabZ (143 aa).

Residue His48 is part of the active site.

It belongs to the thioester dehydratase family. FabZ subfamily.

It localises to the cytoplasm. The catalysed reaction is a (3R)-hydroxyacyl-[ACP] = a (2E)-enoyl-[ACP] + H2O. Involved in unsaturated fatty acids biosynthesis. Catalyzes the dehydration of short chain beta-hydroxyacyl-ACPs and long chain saturated and unsaturated beta-hydroxyacyl-ACPs. In Roseiflexus castenholzii (strain DSM 13941 / HLO8), this protein is 3-hydroxyacyl-[acyl-carrier-protein] dehydratase FabZ.